A 225-amino-acid polypeptide reads, in one-letter code: UPF0173 metal-dependent hydrolase Tneu_1348 (225 aa).

Belongs to the UPF0173 family.

In Pyrobaculum neutrophilum (strain DSM 2338 / JCM 9278 / NBRC 100436 / V24Sta) (Thermoproteus neutrophilus), this protein is UPF0173 metal-dependent hydrolase Tneu_1348.